A 223-amino-acid polypeptide reads, in one-letter code: MKRVALLAVGSFNPPTIAHLRMLEVARSHLETINTQVVEGIMSPVADSYNNKPTLIKSNFRIQMVRAATKSSDWIRADDWECTRTTWTRTIDVLRHHRELVQEKFGSDVGMMLVVGGDVVDSFTRILPDGSNLWNSSDIRTIITEFGLIVLSREGSNPLNTIQSMPAISEFCDRIIQVKDEVCPSGVSSTRLRAAIMNKKSIKYSTPDEVINFIRENNLYQKI.

Residues serine 11 and phenylalanine 12 each coordinate NAD(+). ATP is bound at residue histidine 19. NAD(+) contacts are provided by tryptophan 87, threonine 90, glycine 116, aspartate 118, leucine 133, tryptophan 134, and arginine 153. 190 to 191 lines the ATP pocket; it reads TR.

This sequence belongs to the eukaryotic NMN adenylyltransferase family. The cofactor is a divalent metal cation.

The enzyme catalyses beta-nicotinamide D-ribonucleotide + ATP + H(+) = diphosphate + NAD(+). It catalyses the reaction nicotinate beta-D-ribonucleotide + ATP + H(+) = deamido-NAD(+) + diphosphate. It participates in cofactor biosynthesis; NAD(+) biosynthesis; deamido-NAD(+) from nicotinate D-ribonucleotide: step 1/1. Its pathway is cofactor biosynthesis; NAD(+) biosynthesis; NAD(+) from nicotinamide D-ribonucleotide: step 1/1. In terms of biological role, catalyzes the formation of NAD(+) from nicotinamide mononucleotide (NMN) and ATP. Can also use the deamidated form; nicotinic acid mononucleotide (NaMN) as substrate. The sequence is that of Nicotinamide/nicotinic acid mononucleotide adenylyltransferase 2 from Caenorhabditis elegans.